Consider the following 93-residue polypeptide: Large ribosomal subunit protein uL23 (93 aa).

Belongs to the universal ribosomal protein uL23 family. In terms of assembly, part of the 50S ribosomal subunit. Contacts protein L29, and trigger factor when it is bound to the ribosome.

One of the early assembly proteins it binds 23S rRNA. One of the proteins that surrounds the polypeptide exit tunnel on the outside of the ribosome. Forms the main docking site for trigger factor binding to the ribosome. This chain is Large ribosomal subunit protein uL23, found in Campylobacter jejuni subsp. doylei (strain ATCC BAA-1458 / RM4099 / 269.97).